Here is a 272-residue protein sequence, read N- to C-terminus: Dermonecrotic toxin LvSicTox-alphaIC1aiii (272 aa).

The active site involves histidine 4. Mg(2+) contacts are provided by glutamate 24 and aspartate 26. The active-site Nucleophile is the histidine 40. 2 cysteine pairs are disulfide-bonded: cysteine 44/cysteine 50 and cysteine 46/cysteine 189. Aspartate 84 contributes to the Mg(2+) binding site.

This sequence belongs to the arthropod phospholipase D family. Class II subfamily. Requires Mg(2+) as cofactor. As to expression, expressed by the venom gland.

It localises to the secreted. It carries out the reaction an N-(acyl)-sphingosylphosphocholine = an N-(acyl)-sphingosyl-1,3-cyclic phosphate + choline. It catalyses the reaction an N-(acyl)-sphingosylphosphoethanolamine = an N-(acyl)-sphingosyl-1,3-cyclic phosphate + ethanolamine. The catalysed reaction is a 1-acyl-sn-glycero-3-phosphocholine = a 1-acyl-sn-glycero-2,3-cyclic phosphate + choline. The enzyme catalyses a 1-acyl-sn-glycero-3-phosphoethanolamine = a 1-acyl-sn-glycero-2,3-cyclic phosphate + ethanolamine. Functionally, dermonecrotic toxins cleave the phosphodiester linkage between the phosphate and headgroup of certain phospholipids (sphingolipid and lysolipid substrates), forming an alcohol (often choline) and a cyclic phosphate. This toxin acts on sphingomyelin (SM). It may also act on ceramide phosphoethanolamine (CPE), lysophosphatidylcholine (LPC) and lysophosphatidylethanolamine (LPE), but not on lysophosphatidylserine (LPS), and lysophosphatidylglycerol (LPG). It acts by transphosphatidylation, releasing exclusively cyclic phosphate products as second products. Induces dermonecrosis, hemolysis, increased vascular permeability, edema, inflammatory response, and platelet aggregation. This Loxosceles variegata (Recluse spider) protein is Dermonecrotic toxin LvSicTox-alphaIC1aiii.